A 477-amino-acid chain; its full sequence is Transmembrane and coiled-coil domain protein 3 (477 aa).

Ser-46 is subject to Phosphoserine. A coiled-coil region spans residues 112–153; the sequence is KQVFEKKNQKSAHSIAQLQKKLEQYHRKLREIEQNGASRSSK. Disordered stretches follow at residues 168–188 and 249–277; these read KDAHVKSRTAPHCMESSKSGM and PKYGSDDECSSGTSGSADSNGNQSFGAGG. The residue at position 253 (Ser-253) is a Phosphoserine. Over residues 258 to 273 the composition is skewed to polar residues; sequence SSGTSGSADSNGNQSF. The stretch at 282–398 forms a coiled coil; it reads DSQGKLAVIL…KLELHQQEQQ (117 aa). 2 helical membrane-spanning segments follow: residues 417-437 and 450-470; these read VILAFMTVILVCVSTIAKFVS and FFAVTLLAIFCKNWDHILCAI.

Belongs to the TEX28 family. May form homodimers and heterodimers with TMCC2 or TMCC3 via the coiled-coil domains. Interacts with ribosomal proteins RPL4 and RPS6. In terms of tissue distribution, widely expressed, with highest levels in brain, spinal cord and testis.

Its subcellular location is the endoplasmic reticulum membrane. In Homo sapiens (Human), this protein is Transmembrane and coiled-coil domain protein 3.